The primary structure comprises 158 residues: S-ribosylhomocysteine lyase (158 aa).

Histidine 54, histidine 58, and cysteine 124 together coordinate Fe cation.

It belongs to the LuxS family. In terms of assembly, homodimer. Fe cation is required as a cofactor.

The enzyme catalyses S-(5-deoxy-D-ribos-5-yl)-L-homocysteine = (S)-4,5-dihydroxypentane-2,3-dione + L-homocysteine. In terms of biological role, involved in the synthesis of autoinducer 2 (AI-2) which is secreted by bacteria and is used to communicate both the cell density and the metabolic potential of the environment. The regulation of gene expression in response to changes in cell density is called quorum sensing. Catalyzes the transformation of S-ribosylhomocysteine (RHC) to homocysteine (HC) and 4,5-dihydroxy-2,3-pentadione (DPD). The polypeptide is S-ribosylhomocysteine lyase (Lactobacillus gasseri (strain ATCC 33323 / DSM 20243 / BCRC 14619 / CIP 102991 / JCM 1131 / KCTC 3163 / NCIMB 11718 / NCTC 13722 / AM63)).